The chain runs to 284 residues: uncharacterized protein (284 aa).

Asparagine 79, asparagine 102, asparagine 111, asparagine 147, asparagine 162, asparagine 174, asparagine 196, asparagine 211, asparagine 228, and asparagine 234 each carry an N-linked (GlcNAc...) asparagine; by host glycan. Residues alanine 239–valine 259 traverse the membrane as a helical segment.

Belongs to the RL11 family.

It localises to the membrane. This is an uncharacterized protein from Human cytomegalovirus (strain AD169) (HHV-5).